A 281-amino-acid polypeptide reads, in one-letter code: MYTTAVIDEIRQQVRQWRASGETVAFVPTMGNLHAGHITLIKEAKQRADHVVASIFVNPMQFGKNEDLDAYPRTLAEDQAALTAAGCELLFTPTPDIIYPKGLDAQTFVEVPGISDELCGASRPGHFRGVATIVLKLFNIVQPDVALFGRKDYQQLLVIRTMVEDLSLPLEIVGVETVREASGLAMSSRNGYLTADEKARAAALKAALDALAMQIGAGTAIDAAITEANAALVTAGFRPDYLEVRSATTLALPTDADKELVVLAAAYLGKARLIDNLVFSR.

30–37 serves as a coordination point for ATP; it reads MGNLHAGH. His37 functions as the Proton donor in the catalytic mechanism. Gln61 serves as a coordination point for (R)-pantoate. Gln61 is a binding site for beta-alanine. Residue 149-152 coordinates ATP; that stretch reads GRKD. Gln155 serves as a coordination point for (R)-pantoate. Residues Val178 and 186–189 each bind ATP; that span reads MSSR.

This sequence belongs to the pantothenate synthetase family. As to quaternary structure, homodimer.

The protein localises to the cytoplasm. It catalyses the reaction (R)-pantoate + beta-alanine + ATP = (R)-pantothenate + AMP + diphosphate + H(+). Its pathway is cofactor biosynthesis; (R)-pantothenate biosynthesis; (R)-pantothenate from (R)-pantoate and beta-alanine: step 1/1. Functionally, catalyzes the condensation of pantoate with beta-alanine in an ATP-dependent reaction via a pantoyl-adenylate intermediate. This Shewanella amazonensis (strain ATCC BAA-1098 / SB2B) protein is Pantothenate synthetase.